The following is an 890-amino-acid chain: UPF0182 protein SYNW1212 (890 aa).

8 helical membrane passes run 21 to 41, 64 to 84, 98 to 118, 134 to 154, 173 to 193, 219 to 239, 268 to 288, and 295 to 315; these read WLLQ…AIRW, LTLL…NGLI, WQVS…LVAV, AVVL…SIPL, FAAL…CLGN, RLLM…CWLS, LLTV…SLLL, and VLAV…WLIL.

This sequence belongs to the UPF0182 family.

The protein resides in the cell membrane. This Parasynechococcus marenigrum (strain WH8102) protein is UPF0182 protein SYNW1212.